The primary structure comprises 198 residues: RxLR effector protein CRE4 (198 aa).

Residues 1–20 (MLRSFLLIVATVSLFGQCKP) form the signal peptide. The RxLR-dEER signature appears at 43-52 (RFVRTNDEER).

Belongs to the RxLR effector family.

Its subcellular location is the secreted. It is found in the host cytoplasm. The protein resides in the host nucleus. It localises to the host nucleolus. Its function is as follows. Effector that is involved in host plant infection. Contributes to virulence during the early infection stage, by inhibiting plant defense responses induced by both PAMP-triggered immunity (PTI) and effector-triggered immunity (ETI). This chain is RxLR effector protein CRE4 (CRE4), found in Phytophthora infestans (strain T30-4) (Potato late blight agent).